A 146-amino-acid chain; its full sequence is Cyanate hydratase (146 aa).

Catalysis depends on residues R87, E90, and S113.

This sequence belongs to the cyanase family.

It catalyses the reaction cyanate + hydrogencarbonate + 3 H(+) = NH4(+) + 2 CO2. Catalyzes the reaction of cyanate with bicarbonate to produce ammonia and carbon dioxide. The protein is Cyanate hydratase of Marinomonas sp. (strain MWYL1).